The chain runs to 238 residues: MKYKYSTVLLKLSGEALKSENEIYNKEKLEDIAKQIVELAKNGLKLGIVIGGGNIWRGKLGTDIDMPQINADYMGMLATVMNGLALESTIKRLGYDKVNVYSSLPIETVTDDYNFKRARLKMNEGYISIFVGGTGFSYFTTDTNSVIRAIEIGADAVLMAKNGVKGVYDSDPNLNPNAKFYKKLTHREIAENQLRVMDLTAATLAKDAKLPIEVFDMQGQNNIIKVMEGSLESTIIEE.

11-14 is a binding site for ATP; the sequence is KLSG. Residue Gly52 participates in UMP binding. 2 residues coordinate ATP: Gly53 and Arg57. UMP contacts are provided by residues Asp72 and 134-141; that span reads TGFSYFTT. Residues Asn162, Tyr168, and Asp171 each coordinate ATP.

Belongs to the UMP kinase family. As to quaternary structure, homohexamer.

The protein localises to the cytoplasm. It catalyses the reaction UMP + ATP = UDP + ADP. It functions in the pathway pyrimidine metabolism; CTP biosynthesis via de novo pathway; UDP from UMP (UMPK route): step 1/1. With respect to regulation, inhibited by UTP. Functionally, catalyzes the reversible phosphorylation of UMP to UDP. This is Uridylate kinase from Mesoplasma florum (strain ATCC 33453 / NBRC 100688 / NCTC 11704 / L1) (Acholeplasma florum).